The following is a 329-amino-acid chain: Ketol-acid reductoisomerase (NADP(+)) (329 aa).

In terms of domain architecture, KARI N-terminal Rossmann spans valine 2–threonine 181. NADP(+) contacts are provided by residues tyrosine 25–glutamine 28, arginine 48, serine 52, and aspartate 82–glutamine 85. Residue histidine 107 is part of the active site. Glycine 133 lines the NADP(+) pocket. Residues threonine 182 to phenylalanine 327 enclose the KARI C-terminal knotted domain. Positions 190, 194, 226, and 230 each coordinate Mg(2+). Serine 251 is a substrate binding site.

This sequence belongs to the ketol-acid reductoisomerase family. The cofactor is Mg(2+).

The enzyme catalyses (2R)-2,3-dihydroxy-3-methylbutanoate + NADP(+) = (2S)-2-acetolactate + NADPH + H(+). It carries out the reaction (2R,3R)-2,3-dihydroxy-3-methylpentanoate + NADP(+) = (S)-2-ethyl-2-hydroxy-3-oxobutanoate + NADPH + H(+). The protein operates within amino-acid biosynthesis; L-isoleucine biosynthesis; L-isoleucine from 2-oxobutanoate: step 2/4. It functions in the pathway amino-acid biosynthesis; L-valine biosynthesis; L-valine from pyruvate: step 2/4. Involved in the biosynthesis of branched-chain amino acids (BCAA). Catalyzes an alkyl-migration followed by a ketol-acid reduction of (S)-2-acetolactate (S2AL) to yield (R)-2,3-dihydroxy-isovalerate. In the isomerase reaction, S2AL is rearranged via a Mg-dependent methyl migration to produce 3-hydroxy-3-methyl-2-ketobutyrate (HMKB). In the reductase reaction, this 2-ketoacid undergoes a metal-dependent reduction by NADPH to yield (R)-2,3-dihydroxy-isovalerate. This Methanoculleus marisnigri (strain ATCC 35101 / DSM 1498 / JR1) protein is Ketol-acid reductoisomerase (NADP(+)).